Consider the following 210-residue polypeptide: Ribosomal RNA large subunit methyltransferase E (210 aa).

S-adenosyl-L-methionine contacts are provided by G60, W62, D85, D101, and D126. The active-site Proton acceptor is K166.

Belongs to the class I-like SAM-binding methyltransferase superfamily. RNA methyltransferase RlmE family.

It is found in the cytoplasm. It catalyses the reaction uridine(2552) in 23S rRNA + S-adenosyl-L-methionine = 2'-O-methyluridine(2552) in 23S rRNA + S-adenosyl-L-homocysteine + H(+). In terms of biological role, specifically methylates the uridine in position 2552 of 23S rRNA at the 2'-O position of the ribose in the fully assembled 50S ribosomal subunit. In Bordetella pertussis (strain Tohama I / ATCC BAA-589 / NCTC 13251), this protein is Ribosomal RNA large subunit methyltransferase E.